Reading from the N-terminus, the 222-residue chain is Translation initiation factor 6 (222 aa).

This sequence belongs to the eIF-6 family.

Functionally, binds to the 50S ribosomal subunit and prevents its association with the 30S ribosomal subunit to form the 70S initiation complex. The polypeptide is Translation initiation factor 6 (Methanocorpusculum labreanum (strain ATCC 43576 / DSM 4855 / Z)).